A 91-amino-acid chain; its full sequence is Probable Fe(2+)-trafficking protein (91 aa).

It belongs to the Fe(2+)-trafficking protein family.

Could be a mediator in iron transactions between iron acquisition and iron-requiring processes, such as synthesis and/or repair of Fe-S clusters in biosynthetic enzymes. The polypeptide is Probable Fe(2+)-trafficking protein (Burkholderia ambifaria (strain MC40-6)).